The following is a 497-amino-acid chain: NADH-quinone oxidoreductase subunit N (497 aa).

14 consecutive transmembrane segments (helical) span residues 14–34 (LMAM…MLSI), 45–65 (SLTV…WGLF), 86–106 (IFYS…AYPW), 116–136 (EFYL…SAQH), 137–157 (LAAV…LLGY), 171–191 (YFVL…MLYA), 215–235 (ILAG…LVPF), 253–273 (FLGT…FLYV), 281–301 (LNTA…LMAL), 309–329 (LLGY…IALH), 338–358 (VAVY…VVSL), 385–405 (AAVM…LGFI), 420–439 (WVLT…YYLR), and 461–481 (AFTA…VFGI).

The protein belongs to the complex I subunit 2 family. In terms of assembly, NDH-1 is composed of 13 different subunits. Subunits NuoA, H, J, K, L, M, N constitute the membrane sector of the complex.

Its subcellular location is the cell membrane. It carries out the reaction a quinone + NADH + 5 H(+)(in) = a quinol + NAD(+) + 4 H(+)(out). Functionally, NDH-1 shuttles electrons from NADH, via FMN and iron-sulfur (Fe-S) centers, to quinones in the respiratory chain. The immediate electron acceptor for the enzyme in this species is believed to be ubiquinone. Couples the redox reaction to proton translocation (for every two electrons transferred, four hydrogen ions are translocated across the cytoplasmic membrane), and thus conserves the redox energy in a proton gradient. In Hamiltonella defensa subsp. Acyrthosiphon pisum (strain 5AT), this protein is NADH-quinone oxidoreductase subunit N.